The sequence spans 330 residues: MPTPAPPTELLPWERAVVLLSCVLSALGSGLLVATHALWPDLRSRARRLLLFLSLADLLSAASYFYGVLQDFAGTSWDCVLQGALSTFANTSSFFWTVAIALYLYLNIVRATRGPCTDHLVWAFHLISWGVPLAITVAAVCLKKIGYDASDVSVGWCWINLEAEDRVLWMLLTGKLWEMLAYILLPLLYLLVRKHINRAHQALSEYRPIWEGRQLQRGSPTSMADKKLILIPFIFICLRVWSTVRFVLTLCGSPVVQAPVLVVLHGIGNTFQGGANCIMFVLCTRAVRTRLFSLCCCYPRPPTQNPPGASIPPKMGESQESRRTPEVPST.

Residues 1–15 (MPTPAPPTELLPWER) lie on the Extracellular side of the membrane. The helical transmembrane segment at 16-36 (AVVLLSCVLSALGSGLLVATH) threads the bilayer. At 37–48 (ALWPDLRSRARR) the chain is on the cytoplasmic side. Residues 49-69 (LLLFLSLADLLSAASYFYGVL) traverse the membrane as a helical segment. Residues 70 to 87 (QDFAGTSWDCVLQGALST) lie on the Extracellular side of the membrane. A helical membrane pass occupies residues 88–108 (FANTSSFFWTVAIALYLYLNI). The Cytoplasmic segment spans residues 109 to 119 (VRATRGPCTDH). Residues 120 to 140 (LVWAFHLISWGVPLAITVAAV) form a helical membrane-spanning segment. At 141-166 (CLKKIGYDASDVSVGWCWINLEAEDR) the chain is on the extracellular side. The helical transmembrane segment at 167–187 (VLWMLLTGKLWEMLAYILLPL) threads the bilayer. At 188–227 (LYLLVRKHINRAHQALSEYRPIWEGRQLQRGSPTSMADKK) the chain is on the cytoplasmic side. A helical membrane pass occupies residues 228–250 (LILIPFIFICLRVWSTVRFVLTL). The Extracellular segment spans residues 251 to 259 (CGSPVVQAP). Residues 260-282 (VLVVLHGIGNTFQGGANCIMFVL) traverse the membrane as a helical segment. The Cytoplasmic segment spans residues 283 to 330 (CTRAVRTRLFSLCCCYPRPPTQNPPGASIPPKMGESQESRRTPEVPST). Residues 303–330 (TQNPPGASIPPKMGESQESRRTPEVPST) form a disordered region. Residues 317–330 (ESQESRRTPEVPST) are compositionally biased toward basic and acidic residues.

This sequence belongs to the G-protein coupled receptor 2 family.

It localises to the cell projection. It is found in the cilium membrane. Its function is as follows. Orphan receptor that promotes neuronal differentiation of radial glial progenitors (RGPs). The activity of this receptor is mediated by a G(q)-protein that activates a phosphatidylinositol-calcium second messenger. The sequence is that of G-protein coupled receptor 157 (Gpr157) from Rattus norvegicus (Rat).